The primary structure comprises 327 residues: GMP reductase (327 aa).

The Thioimidate intermediate role is filled by cysteine 176. 205-228 (IIADGGIRTHGDIAKSIRFGATMV) is a binding site for NADP(+).

It belongs to the IMPDH/GMPR family. GuaC type 2 subfamily.

It catalyses the reaction IMP + NH4(+) + NADP(+) = GMP + NADPH + 2 H(+). In terms of biological role, catalyzes the irreversible NADPH-dependent deamination of GMP to IMP. It functions in the conversion of nucleobase, nucleoside and nucleotide derivatives of G to A nucleotides, and in maintaining the intracellular balance of A and G nucleotides. In Streptococcus equi subsp. zooepidemicus (strain H70), this protein is GMP reductase.